A 352-amino-acid polypeptide reads, in one-letter code: 4-hydroxy-3-methylbut-2-en-1-yl diphosphate synthase (flavodoxin) (352 aa).

The [4Fe-4S] cluster site is built by C263, C266, C298, and E305.

Belongs to the IspG family. It depends on [4Fe-4S] cluster as a cofactor.

The enzyme catalyses (2E)-4-hydroxy-3-methylbut-2-enyl diphosphate + oxidized [flavodoxin] + H2O + 2 H(+) = 2-C-methyl-D-erythritol 2,4-cyclic diphosphate + reduced [flavodoxin]. It functions in the pathway isoprenoid biosynthesis; isopentenyl diphosphate biosynthesis via DXP pathway; isopentenyl diphosphate from 1-deoxy-D-xylulose 5-phosphate: step 5/6. Its function is as follows. Converts 2C-methyl-D-erythritol 2,4-cyclodiphosphate (ME-2,4cPP) into 1-hydroxy-2-methyl-2-(E)-butenyl 4-diphosphate. This Sulfurimonas denitrificans (strain ATCC 33889 / DSM 1251) (Thiomicrospira denitrificans (strain ATCC 33889 / DSM 1251)) protein is 4-hydroxy-3-methylbut-2-en-1-yl diphosphate synthase (flavodoxin).